The primary structure comprises 426 residues: Glucan 1,3-beta-glucosidase (426 aa).

The signal sequence occupies residues 1 to 20; that stretch reads MLYPRALLPAAVALASLVLA. Residue Glu-208 is the Proton donor of the active site. Intrachain disulfides connect Cys-290/Cys-416 and Cys-315/Cys-343. Glu-307 serves as the catalytic Nucleophile.

This sequence belongs to the glycosyl hydrolase 5 (cellulase A) family.

The protein localises to the secreted. The catalysed reaction is Successive hydrolysis of beta-D-glucose units from the non-reducing ends of (1-&gt;3)-beta-D-glucans, releasing alpha-glucose.. Functionally, beta-glucanases participate in the metabolism of beta-glucan, the main structural component of the cell wall. It could also function biosynthetically as a transglycosylase. In Blumeria graminis (Powdery mildew), this protein is Glucan 1,3-beta-glucosidase.